Here is a 316-residue protein sequence, read N- to C-terminus: 4-hydroxy-3-methylbut-2-enyl diphosphate reductase (316 aa).

Residue C12 participates in [4Fe-4S] cluster binding. 2 residues coordinate (2E)-4-hydroxy-3-methylbut-2-enyl diphosphate: H41 and H74. H41 and H74 together coordinate dimethylallyl diphosphate. 2 residues coordinate isopentenyl diphosphate: H41 and H74. C96 contributes to the [4Fe-4S] cluster binding site. Position 124 (H124) interacts with (2E)-4-hydroxy-3-methylbut-2-enyl diphosphate. H124 is a binding site for dimethylallyl diphosphate. Isopentenyl diphosphate is bound at residue H124. Residue E126 is the Proton donor of the active site. T167 contributes to the (2E)-4-hydroxy-3-methylbut-2-enyl diphosphate binding site. C197 is a binding site for [4Fe-4S] cluster. (2E)-4-hydroxy-3-methylbut-2-enyl diphosphate contacts are provided by S225, S226, N227, and S269. S225, S226, N227, and S269 together coordinate dimethylallyl diphosphate. Isopentenyl diphosphate contacts are provided by S225, S226, N227, and S269.

Belongs to the IspH family. As to quaternary structure, homodimer. [4Fe-4S] cluster is required as a cofactor.

The enzyme catalyses isopentenyl diphosphate + 2 oxidized [2Fe-2S]-[ferredoxin] + H2O = (2E)-4-hydroxy-3-methylbut-2-enyl diphosphate + 2 reduced [2Fe-2S]-[ferredoxin] + 2 H(+). It carries out the reaction dimethylallyl diphosphate + 2 oxidized [2Fe-2S]-[ferredoxin] + H2O = (2E)-4-hydroxy-3-methylbut-2-enyl diphosphate + 2 reduced [2Fe-2S]-[ferredoxin] + 2 H(+). The protein operates within isoprenoid biosynthesis; dimethylallyl diphosphate biosynthesis; dimethylallyl diphosphate from (2E)-4-hydroxy-3-methylbutenyl diphosphate: step 1/1. Its pathway is isoprenoid biosynthesis; isopentenyl diphosphate biosynthesis via DXP pathway; isopentenyl diphosphate from 1-deoxy-D-xylulose 5-phosphate: step 6/6. In terms of biological role, catalyzes the conversion of 1-hydroxy-2-methyl-2-(E)-butenyl 4-diphosphate (HMBPP) into a mixture of isopentenyl diphosphate (IPP) and dimethylallyl diphosphate (DMAPP). Acts in the terminal step of the DOXP/MEP pathway for isoprenoid precursor biosynthesis. This Pectobacterium carotovorum subsp. carotovorum (strain PC1) protein is 4-hydroxy-3-methylbut-2-enyl diphosphate reductase.